We begin with the raw amino-acid sequence, 188 residues long: GTPase KRas (188 aa).

Residues 10 to 18, 29 to 35, 59 to 60, and 116 to 119 contribute to the GTP site; these read GAGGVGKSA, VDEYDPT, AG, and NKCD. The short motif at 32 to 40 is the Effector region element; it reads YDPTIEDSY. Residues 167–188 are disordered; that stretch reads KEKMSKEGKKKKKKSKTKCILM. The residue at position 185 (Cys-185) is a Cysteine methyl ester. Cys-185 carries the S-farnesyl cysteine lipid modification. Residues 186–188 constitute a propeptide, removed in mature form; the sequence is ILM.

It belongs to the small GTPase superfamily. Ras family.

The protein localises to the cell membrane. It is found in the cytoplasm. The enzyme catalyses GTP + H2O = GDP + phosphate + H(+). Its activity is regulated as follows. Alternates between an inactive form bound to GDP and an active form bound to GTP. Activated by a guanine nucleotide-exchange factor (GEF) and inactivated by a GTPase-activating protein (GAP). Ras proteins bind GDP/GTP and possess intrinsic GTPase activity. Plays an important role in the regulation of cell proliferation. This chain is GTPase KRas (kras1), found in Oryzias latipes (Japanese rice fish).